A 150-amino-acid chain; its full sequence is MSTEVSNESPVTVDEAEFAALARYVLDQLHVHPQAELSILFVDIPAMSDLHERWMDEPGPTDVLSFPMDELRPGRDDAPSGPGVLGDVVLCPEVAAEQARTAGHSTEEELLLLTTHGILHLLGFDHAEPDEEREMFDLQRKLLLTFLAGR.

Positions 116, 120, and 126 each coordinate Zn(2+).

Belongs to the endoribonuclease YbeY family. Zn(2+) serves as cofactor.

It localises to the cytoplasm. In terms of biological role, single strand-specific metallo-endoribonuclease involved in late-stage 70S ribosome quality control and in maturation of the 3' terminus of the 16S rRNA. This chain is Endoribonuclease YbeY, found in Beutenbergia cavernae (strain ATCC BAA-8 / DSM 12333 / CCUG 43141 / JCM 11478 / NBRC 16432 / NCIMB 13614 / HKI 0122).